The primary structure comprises 344 residues: MEETPQHCLSRLPDNSALKQQELPAHRLYFTARRVLFVFFTTGIFCLCMGIILILSARSTQEIEINYTRICANCAKLRENASNFDKECTCSIPFYLSGKMMGNVYMYYKLYGFYQNLYRYVRSRSNRQLVGKDVKAVEDCAPFKMSDNKTPIVPCGAIANSMFNDTIILSHNINSSVQIKVPMLKSGLTWWTDKYVKFQNPSSKNLADEFRGTTKPPNWPKPIYDLDKKDPRNNGFLNDDFIVWMRAAAFPTFKKLYGRLNRTHHFIEGLPAGNYSFNITYNFPVTRFQGEKSVVLSTLTWCGGNSLFLGLAYTVTGAITWLASFTMMAIHITLKNKQMSFFHQ.

Residues 1–34 lie on the Cytoplasmic side of the membrane; the sequence is MEETPQHCLSRLPDNSALKQQELPAHRLYFTARR. Residues 35 to 55 traverse the membrane as a helical segment; the sequence is VLFVFFTTGIFCLCMGIILIL. The Extracellular portion of the chain corresponds to 56–306; that stretch reads SARSTQEIEI…STLTWCGGNS (251 aa). Asn66 and Asn261 each carry an N-linked (GlcNAc...) asparagine glycan. The helical transmembrane segment at 307–327 threads the bilayer; sequence LFLGLAYTVTGAITWLASFTM. The Cytoplasmic segment spans residues 328 to 344; the sequence is MAIHITLKNKQMSFFHQ.

It belongs to the CDC50/LEM3 family. In terms of tissue distribution, specifically expressed in testis.

The protein localises to the membrane. The chain is Cell cycle control protein 50C (TMEM30C) from Macaca fascicularis (Crab-eating macaque).